Consider the following 470-residue polypeptide: Cytochrome P450 monooxygenase sirC (470 aa).

The chain crosses the membrane as a helical span at residues 12 to 34 (LRGMVVGTIMLLCYRYGLALSIL). A glycan (N-linked (GlcNAc...) asparagine) is linked at N399. C410 is a heme binding site.

Belongs to the cytochrome P450 family. Heme serves as cofactor.

The protein resides in the membrane. It participates in mycotoxin biosynthesis. In terms of biological role, cytochrome P450 monooxygenase; part of the gene cluster that mediates the biosynthesis of sirodesmin PL, an epipolythiodioxopiperazine (ETP) characterized by a disulfide bridged cyclic dipeptide and that acts as a phytotoxin which is involved in the blackleg didease of canola. SirD catalyzes the O-prenylation of L-tyrosine (L-Tyr) in the presence of dimethylallyl diphosphate (DMAPP) to yield 4-O-dimethylallyl-L-Tyr, and therefore represents probably the first pathway-specific enzyme in the biosynthesis of sirodesmin PL. 4-O-dimethylallyl-L-Tyr, then undergoes condensation with L-Ser in a reaction catalyzed by the non-ribosomal peptide synthase sirP to form the diketopiperazine (DKP) backbone. Further bishydroxylation of the DKP performed by the cytochrome P450 monooxygenase sirC leads to the production of the intermediate phomamide. This step is essential to form the reactive thiol group required for toxicity of sirodesmin PL. The next steps of sirodesmin biosynthesis are not well understood yet, but some predictions could be made from intermediate compounds identification. Phomamide is converted into phomalizarine via oxidation, probably by sirT. Further oxidation, methylation (by sirM or sirN) and reduction steps convert phomalizarine to deacetyl sirodesmin. Finally, acetyltransferase sirH probably acetylates deacetyl sirodesmin to produce sirodesmin PL. This is Cytochrome P450 monooxygenase sirC from Leptosphaeria maculans (Blackleg fungus).